The chain runs to 528 residues: Ecdysteroid UDP-glucosyltransferase (528 aa).

The N-terminal stretch at 1–32 (MGHLHIVHWRLTMNGAIAALFLCLVMVHQQHA) is a signal peptide.

The protein belongs to the UDP-glycosyltransferase family.

Its function is as follows. Catalyzes the transfer of glucose from UDP-glucose to ecdysteroids which are insect molting hormones. Expression of egt interferes with normal insect development and block molting. The sequence is that of Ecdysteroid UDP-glucosyltransferase (EGT) from Mamestra brassicae nuclear polyhedrosis virus (MbNPV).